The following is a 139-amino-acid chain: Putative pre-16S rRNA nuclease (139 aa).

It belongs to the YqgF nuclease family.

It localises to the cytoplasm. Its function is as follows. Could be a nuclease involved in processing of the 5'-end of pre-16S rRNA. The sequence is that of Putative pre-16S rRNA nuclease from Streptococcus thermophilus (strain CNRZ 1066).